We begin with the raw amino-acid sequence, 505 residues long: Catalase (505 aa).

Active-site residues include histidine 56 and asparagine 129. Tyrosine 339 contacts heme.

The protein belongs to the catalase family. The cofactor is heme.

Its subcellular location is the cytoplasm. The enzyme catalyses 2 H2O2 = O2 + 2 H2O. Functionally, decomposes hydrogen peroxide into water and oxygen; serves to protect cells from the toxic effects of hydrogen peroxide. The chain is Catalase (katA) from Helicobacter pylori (strain J99 / ATCC 700824) (Campylobacter pylori J99).